The sequence spans 433 residues: ATP-dependent protease ATPase subunit HslU (433 aa).

ATP-binding positions include Val18, 60 to 65, Asp246, Glu311, and Arg383; that span reads GVGKTE.

It belongs to the ClpX chaperone family. HslU subfamily. In terms of assembly, a double ring-shaped homohexamer of HslV is capped on each side by a ring-shaped HslU homohexamer. The assembly of the HslU/HslV complex is dependent on binding of ATP.

It localises to the cytoplasm. In terms of biological role, ATPase subunit of a proteasome-like degradation complex; this subunit has chaperone activity. The binding of ATP and its subsequent hydrolysis by HslU are essential for unfolding of protein substrates subsequently hydrolyzed by HslV. HslU recognizes the N-terminal part of its protein substrates and unfolds these before they are guided to HslV for hydrolysis. The polypeptide is ATP-dependent protease ATPase subunit HslU (Rhodopseudomonas palustris (strain ATCC BAA-98 / CGA009)).